The primary structure comprises 105 residues: UPF0145 protein VP1283 (105 aa).

The protein belongs to the UPF0145 family.

This Vibrio parahaemolyticus serotype O3:K6 (strain RIMD 2210633) protein is UPF0145 protein VP1283.